Here is a 1341-residue protein sequence, read N- to C-terminus: MATLKQIQFKRSKTAGARPAASVLAEGELAINLKDRTIFTKDDSGNIIDLSISAGGNISGNITQTGDYTQTGKFNLIGPQIVASGGYIEFNYRTTGSGAWSGQHTAKAPIFVDLSSATSTSEYNPIIKQRFKDGTFSLGTLVSEGSLKIHYINESGDSKYWTFRRDGGFTVDGGGLGVSGGSITTSGNIAALGNITSPQINTKNIILDTKAFGQYDSQSLVQYVYPGTGEENGINYLRKVRAKSGGTIYHEIASAQTGKNDEISWWTGNTLTTKLMGLRNDGAMVLRRSLAIGTITADENTNNYGSPTPMGERYIALGDAATGLKYIKQGVYDLVGNWNSVASITPDSFRSTRKALFGRSEDQGGTWTMPGTNAALLSVQTQADVNNAGDGQTHIGYNSGGKMSHYFRGKGQTNINTQKGMEVNPGILKLVTDSNNVQFYANGTVSSIQRIKFDNGLVLTGARPDGIQLDAPTAADGTKTILWAGGTRAGQNKSYVSIKAWGNSFNASGDRARETVFEVGDGQGFHFYSQRVAPAPGSTVGPIQLRVNGGLLTAGSIVASGSITTESSLNVNNGLSVNGQAKFGGTANALRIWNAEYGVIFRRSESNFYIIPTNQNEGESGDIHSSLRPVRIGLNDGAVGLGRDSFIVDQNNALTTINSNSRINANFRMQLGQSTYIDAECTDTVRPAGAGSFVSQNNENVRAPFYMNINRTDTSTYVPILKQRYVQGNSCYSLGTLISTGDFRIHYHEGGDNGSTGPQKADLAWQFRRDGSFRSPNKIEINAVTIGTDGNITGGTGNFANLNTTLNRKTTVGGWAGSSVVGWYKFATVTIPQSTGTVTFKISGGAGFNFKSYNQASIAEIVLRTGNNPKGINAVLWNRSDLSFNQIATMNTSDDTYDVYVFCEGYTNALIVEYSCSENSSVTVVGLNGGIQPVVDALPEGHVVGKTVRLLNNIGGTFAAGESDIVTRGEYVADNQKGMRIKSNGNNIGSNAAILRNDGGSFYILATDKNTAEKSDAANGDWNGLRPFAINMADGRVGMNHGLNITGGGLNVTGGLNVTSGNTSLGNISSRVVARWRGASGWADNSDTMKSKITFMADHGDLSNSDSYYPIVGAYSNYGSAGYRQTFEFGWVGSGTTAGWRDGIIRIRGDNANGQQARWRFTMDGTLDCPGKVLLPQTGAFGVNTSNGLGGNSITFGDSDTGIKQNGDGLLDIYANSVQVFRFQNGDLYSYKNINAPNVYIRSDIRLKSNFKPIENALDKVEKLNGVIYDKAEYIGGEAIETEAGIVAQTLQDVLPEAVRETEDSKGNKILTVSSQAQIALLVEAVKTLSARVKELESKLM.

The interaction with the receptor-recognizing protein gp38 stretch occupies residues 1238–1241 (NVYI). Residues 1243 to 1340 (SDIRLKSNFK…ARVKELESKL (98 aa)) enclose the Peptidase S74 domain.

It belongs to the S16-like long tail fiber protein Gp37 family. As to quaternary structure, homotrimer. Interacts with the receptor-recognizing protein Gp38. Post-translationally, proteolytic cleavage and release of the chaperone in the host cytosol stabilizes the folded protein.

The protein resides in the virion. Functionally, constitues the trimeric tip of the long tail fiber that mediates the attachment to the host receptor, together with the receptor-recognizing protein Gp38. The C-terminal chaperone protein mediates homotrimerization and proper folding of the catalytic trimer. This is Long tail fiber protein Gp37 (37) from Escherichia coli (Bacteriophage T2).